The primary structure comprises 30 residues: KAWFVLSMRAVGGLFVDLWTSVAKTVKGWL.

It carries out the reaction Release of a C-terminal alanine from a peptide or a variety of pteroyl or acyl groups.. This is Alanine carboxypeptidase from Geobacillus stearothermophilus (Bacillus stearothermophilus).